We begin with the raw amino-acid sequence, 178 residues long: Large ribosomal subunit protein bL17 (178 aa).

The interval 150-178 is disordered; that stretch reads PADEPVVAEENAPQSAVKDAVDECEGKAD. Over residues 168–178 the composition is skewed to basic and acidic residues; sequence DAVDECEGKAD.

The protein belongs to the bacterial ribosomal protein bL17 family. As to quaternary structure, part of the 50S ribosomal subunit. Contacts protein L32.

This chain is Large ribosomal subunit protein bL17, found in Geobacter metallireducens (strain ATCC 53774 / DSM 7210 / GS-15).